A 180-amino-acid chain; its full sequence is Inner membrane-spanning protein YciB (180 aa).

6 helical membrane-spanning segments follow: residues L4 to I24, Q25 to I45, L52 to N72, I76 to I96, I118 to V138, and F150 to L170.

Belongs to the YciB family.

It localises to the cell inner membrane. Plays a role in cell envelope biogenesis, maintenance of cell envelope integrity and membrane homeostasis. The chain is Inner membrane-spanning protein YciB from Rickettsia massiliae (strain Mtu5).